The primary structure comprises 118 residues: Small ribosomal subunit protein uS13 (118 aa).

The disordered stretch occupies residues 94 to 118 (GLPLRGQRTRTNARTRKGPRRPIRK).

It belongs to the universal ribosomal protein uS13 family. In terms of assembly, part of the 30S ribosomal subunit. Forms a loose heterodimer with protein S19. Forms two bridges to the 50S subunit in the 70S ribosome.

In terms of biological role, located at the top of the head of the 30S subunit, it contacts several helices of the 16S rRNA. In the 70S ribosome it contacts the 23S rRNA (bridge B1a) and protein L5 of the 50S subunit (bridge B1b), connecting the 2 subunits; these bridges are implicated in subunit movement. Contacts the tRNAs in the A and P-sites. The chain is Small ribosomal subunit protein uS13 from Thioalkalivibrio sulfidiphilus (strain HL-EbGR7).